Reading from the N-terminus, the 247-residue chain is NH(3)-dependent NAD(+) synthetase (247 aa).

29–36 (GISGGIDS) serves as a coordination point for ATP. D35 contributes to the Mg(2+) binding site. Residue R120 coordinates deamido-NAD(+). T140 contributes to the ATP binding site. E145 is a Mg(2+) binding site. Residues K153 and D160 each coordinate deamido-NAD(+). Residues K169 and S191 each contribute to the ATP site. 237-238 (HK) provides a ligand contact to deamido-NAD(+).

It belongs to the NAD synthetase family. In terms of assembly, homodimer.

The catalysed reaction is deamido-NAD(+) + NH4(+) + ATP = AMP + diphosphate + NAD(+) + H(+). It functions in the pathway cofactor biosynthesis; NAD(+) biosynthesis; NAD(+) from deamido-NAD(+) (ammonia route): step 1/1. Its function is as follows. Catalyzes the ATP-dependent amidation of deamido-NAD to form NAD. Uses ammonia as a nitrogen source. The polypeptide is NH(3)-dependent NAD(+) synthetase (Alkaliphilus metalliredigens (strain QYMF)).